A 194-amino-acid polypeptide reads, in one-letter code: MPRLILASTSPWRRALLEKLTIPFECAAPDVDETPMPGEAPRQLVLRLAQAKAQSLAARFPNHLIIGSDQICVLDGEITGKPLTEEKARQQLAKASGSIVTFYTGLALYNSASGHLQTEVEPFDVHFRHLSEAEIDDYVRKEHPLHCAGSFKSEGLGIALFERLEGRDPNTLIGLPLIALCQMLRREEMNPLNA.

Residue D69 is the Proton acceptor of the active site.

This sequence belongs to the Maf family. YceF subfamily. A divalent metal cation is required as a cofactor.

The protein resides in the cytoplasm. The enzyme catalyses N(7)-methyl-GTP + H2O = N(7)-methyl-GMP + diphosphate + H(+). Its function is as follows. Nucleoside triphosphate pyrophosphatase that hydrolyzes 7-methyl-GTP (m(7)GTP). May have a dual role in cell division arrest and in preventing the incorporation of modified nucleotides into cellular nucleic acids. This chain is 7-methyl-GTP pyrophosphatase (yceF), found in Salmonella typhi.